The chain runs to 1300 residues: MGTGPAQTPRSTRAGPEPSPAPPGPGDTGDSDVTQEGSGPAGIRGGETVIRAGMGDSPGRGAPERRHKAQPGRARKYEWRPEGPTSMGSLGQREDLQDEDRNSAFTWKVQANNRAYNGQFKEKVILCWQRKKYKTNVIRTAKYNFYSFLPLNLYEQFHRVSNLFFLIIIILQSIPDISTLPWFSLSTPMVCLLFIRATRDLVDDMGRHKSDRAINNRPCQILMGKSFKQKKWQDLCVGDVVCLRKDNIVPADMLLLASTEPSSLCYVETVDIDGETNLKFRQALMVTHKELATIKKMASFQGTVTCEAPNSRMHHFVGCLEWNDKKYSLDIGNLLLRGCRIRNTDTCYGLVIYAGFDTKIMKNCGKIHLKRTKLDLLMNKLVVVIFISVVLVCLVLAFGFGFSVKEFKDHHYYLSGVHGSSVAAESFFVFWSFLILLSVTIPMSMFILSEFIYLGNSVFIDWDVQMYYKPQDVPAKARSTSLNDHLGQVEYIFSDKTGTLTQNILTFNKCCISGRVYGPDSEATTRPKENPYLWNKFADGKLLFHNAALLHLVRTNGDEAVREFWRLLAICHTVMVRESPRERPDQLLYQAASPDEGALVTAARNFGYVFLSRTQDTVTIMELGEERVYQVLAIMDFNSTRKRMSVLVRKPEGAICLYTKGADTVIFERLHRRGAMEFATEEALAAFAQETLRTLCLAYREVAEDIYEDWQQRHQEASLLLQNRAQALQQLLGATAIEDRLQDGVPETIKCLKKSNIKIWVLTGDKQETAVNIGFACELLSENMLILEEKEISRILETYWENSNNLLTRESLSQVKLALVINGDFLDKLLVSLRKEPRALAQNVNMDEAWQELGQSRRDFLYARRLSLLCRRFGLPLAAPPAQDSRARRSSEVLQERAFVDLASKCQAVICCRVTPKQKALIVALVKKYHQVVTLAIGDGANDINMIKTADVGVGLAGQEGMQAVQNSDFVLGQFCFLQRLLLVHGRWSYVRICKFLRYFFYKSMASMMVQVWFACYNGFTGQPLYEGWFLALFNLLYSTLPVLYIGLFEQDVSAEQSLEKPELYVVGQKDELFNYWVFVQAIAHGVTTSLVNFFMTLWISRDTAGPASFSDHQSFAVVVALSCLLSITMEVILIIKYWTALCVATILLSLGFYAIMTTTTQSFWLFRVSPTTFPFLYADLSVMSSPSILLVVLLSVSINTFPVLALRVIFPALKELRAKEEKVEEGPSEEIFTMEPLPHVHRESRARRSSYAFSHREGYANLITQGTILRRGPGVSSDIASESLDPSDEEAASSPKESQ.

Positions 1 to 11 (MGTGPAQTPRS) are enriched in polar residues. The interval 1–98 (MGTGPAQTPR…SLGQREDLQD (98 aa)) is disordered. The Cytoplasmic segment spans residues 1–149 (MGTGPAQTPR…TAKYNFYSFL (149 aa)). The span at 65–74 (RRHKAQPGRA) shows a compositional bias: basic residues. Residues 150–171 (PLNLYEQFHRVSNLFFLIIIIL) traverse the membrane as a helical segment. The Exoplasmic loop segment spans residues 172-177 (QSIPDI). Residues 178–197 (STLPWFSLSTPMVCLLFIRA) traverse the membrane as a helical segment. Over 198-381 (TRDLVDDMGR…TKLDLLMNKL (184 aa)) the chain is Cytoplasmic. A helical transmembrane segment spans residues 382 to 403 (VVVIFISVVLVCLVLAFGFGFS). The Exoplasmic loop portion of the chain corresponds to 404–430 (VKEFKDHHYYLSGVHGSSVAAESFFVF). A helical transmembrane segment spans residues 431 to 452 (WSFLILLSVTIPMSMFILSEFI). The Cytoplasmic portion of the chain corresponds to 453–995 (YLGNSVFIDW…GRWSYVRICK (543 aa)). The active-site 4-aspartylphosphate intermediate is the Asp-495. Residues Asp-495, Lys-496, Thr-497, Glu-596, Phe-637, Lys-660, Arg-693, Thr-763, Gly-764, Asp-765, Arg-913, and Lys-919 each coordinate ATP. Asp-495 serves as a coordination point for Mg(2+). Residue Thr-497 coordinates Mg(2+). Position 939 (Asp-939) interacts with Mg(2+). Residues Asn-942 and Asp-943 each coordinate ATP. Asp-943 is a Mg(2+) binding site. Residues 996 to 1016 (FLRYFFYKSMASMMVQVWFAC) traverse the membrane as a helical segment. Residues 1017 to 1028 (YNGFTGQPLYEG) lie on the Exoplasmic loop side of the membrane. Residues 1029-1048 (WFLALFNLLYSTLPVLYIGL) traverse the membrane as a helical segment. The Cytoplasmic segment spans residues 1049-1078 (FEQDVSAEQSLEKPELYVVGQKDELFNYWV). The helical transmembrane segment at 1079–1100 (FVQAIAHGVTTSLVNFFMTLWI) threads the bilayer. The Exoplasmic loop portion of the chain corresponds to 1101–1112 (SRDTAGPASFSD). A helical membrane pass occupies residues 1113–1135 (HQSFAVVVALSCLLSITMEVILI). Over 1136–1141 (IKYWTA) the chain is Cytoplasmic. Residues 1142-1162 (LCVATILLSLGFYAIMTTTTQ) form a helical membrane-spanning segment. Topologically, residues 1163–1182 (SFWLFRVSPTTFPFLYADLS) are exoplasmic loop. A helical membrane pass occupies residues 1183-1207 (VMSSPSILLVVLLSVSINTFPVLAL). Residues 1208–1300 (RVIFPALKEL…EAASSPKESQ (93 aa)) lie on the Cytoplasmic side of the membrane. Residues 1272–1300 (RGPGVSSDIASESLDPSDEEAASSPKESQ) form a disordered region.

This sequence belongs to the cation transport ATPase (P-type) (TC 3.A.3) family. Type IV subfamily. The cofactor is Mg(2+). In terms of tissue distribution, isoform 3 was only detected in testis.

The protein resides in the cytoplasmic vesicle. The protein localises to the secretory vesicle. Its subcellular location is the acrosome membrane. It localises to the endoplasmic reticulum membrane. The enzyme catalyses ATP + H2O + phospholipidSide 1 = ADP + phosphate + phospholipidSide 2.. The catalysed reaction is a 1,2-diacyl-sn-glycero-3-phospho-L-serine(out) + ATP + H2O = a 1,2-diacyl-sn-glycero-3-phospho-L-serine(in) + ADP + phosphate + H(+). Its function is as follows. P4-ATPase flippase which catalyzes the hydrolysis of ATP coupled to the transport of aminophospholipids from the outer to the inner leaflet of various membranes and ensures the maintenance of asymmetric distribution of phospholipids. Phospholipid translocation also seems to be implicated in vesicle formation and in uptake of lipid signaling molecules. May be responsible for the maintenance of asymmetric distribution of phosphatidylserine (PS) in spermatozoa membranes. Involved in acrosome reactions and binding of spermatozoa to zona pellucida. The sequence is that of Phospholipid-transporting ATPase IK from Homo sapiens (Human).